The following is a 167-amino-acid chain: Photosystem I assembly protein Ycf3 (167 aa).

TPR repeat units follow at residues 35–68 (AFTYYRDGMSAQSEGEYAEALQNYYEAMRLEIDP), 72–105 (SYILYNIGLIHTSNGEHAKALEYYFQALERNPSL), and 120–153 (GEQAIQQGDPEASETWFDQAAEYWKQAILLAPSN).

Belongs to the Ycf3 family.

It is found in the plastid. The protein localises to the chloroplast thylakoid membrane. Functionally, essential for the assembly of the photosystem I (PSI) complex. May act as a chaperone-like factor to guide the assembly of the PSI subunits. The chain is Photosystem I assembly protein Ycf3 from Marchantia polymorpha (Common liverwort).